Here is a 148-residue protein sequence, read N- to C-terminus: Lysozyme C, non-stomach isozyme (148 aa).

The first 18 residues, 1–18 (MKALLILGLLLFSVAVQG), serve as a signal peptide directing secretion. The C-type lysozyme domain maps to 19-148 (KVFERCELAR…LTSYIQGCGV (130 aa)). 4 disulfide bridges follow: Cys24/Cys146, Cys48/Cys134, Cys83/Cys99, and Cys95/Cys113. Residues Glu53 and Asp71 contribute to the active site.

Belongs to the glycosyl hydrolase 22 family. In terms of tissue distribution, expressed in blood cells.

It carries out the reaction Hydrolysis of (1-&gt;4)-beta-linkages between N-acetylmuramic acid and N-acetyl-D-glucosamine residues in a peptidoglycan and between N-acetyl-D-glucosamine residues in chitodextrins.. In terms of biological role, lysozymes have primarily a bacteriolytic function; those in tissues and body fluids are associated with the monocyte-macrophage system and enhance the activity of immunoagents. The chain is Lysozyme C, non-stomach isozyme (LYS) from Bos taurus (Bovine).